The chain runs to 128 residues: Gastrotropin (128 aa).

N-acetylalanine is present on A2.

It belongs to the calycin superfamily. Fatty-acid binding protein (FABP) family.

The protein localises to the cytoplasm. It is found in the membrane. Binds to bile acids and is involved in enterohepatic bile acid metabolism. Required for efficient apical to basolateral transport of conjugated bile acids in ileal enterocytes. Stimulates gastric acid and pepsinogen secretion. This chain is Gastrotropin (FABP6), found in Bos taurus (Bovine).